Consider the following 309-residue polypeptide: Olfactory receptor 1L8 (309 aa).

Residues 1–26 (MERINHTSSVSEFILLGLSSRPEDQK) are Extracellular-facing. N-linked (GlcNAc...) asparagine glycosylation is present at Asn-5. Residues 27-50 (TLFVLFLIVYLVTITGNLLIILAI) form a helical membrane-spanning segment. Topologically, residues 51 to 58 (RFNPHLQT) are cytoplasmic. The chain crosses the membrane as a helical span at residues 59 to 80 (PMYFFLSFLSLTDICFTTSVVP). The Extracellular portion of the chain corresponds to 81–101 (KMLMNFLSEKKTISYAGCLTQ). Cys-98 and Cys-190 are joined by a disulfide. The chain crosses the membrane as a helical span at residues 102–121 (MYFLYALGNSDSCLLAVMAF). At 122-140 (DRYVAVCDPFHYVTTMSHH) the chain is on the cytoplasmic side. The chain crosses the membrane as a helical span at residues 141-159 (HCVLLVAFSCSFPHLHSLL). The Extracellular portion of the chain corresponds to 160–197 (HTLLLNRLTFCDSNVIHHFLCDLSPVLKLSCSSIFVNE). Residues 198-220 (IVQMTEAPIVLVTRFLCIAFSYI) form a helical membrane-spanning segment. Residues 221-237 (RILTTVLKIPSTSGKRK) lie on the Cytoplasmic side of the membrane. Residues 238–260 (AFSTCGFYLTVVTLFYGSIFCVY) form a helical membrane-spanning segment. Residues 261 to 272 (LQPPSTYAVKDH) lie on the Extracellular side of the membrane. Residues 273–292 (VATIVYTVLSSMLNPFIYSL) form a helical membrane-spanning segment. Residues 293 to 309 (RNKDLKQGLRKLMSKRS) are Cytoplasmic-facing.

This sequence belongs to the G-protein coupled receptor 1 family.

It localises to the cell membrane. In terms of biological role, odorant receptor. The chain is Olfactory receptor 1L8 (OR1L8) from Homo sapiens (Human).